Here is a 440-residue protein sequence, read N- to C-terminus: GTPase Der (440 aa).

2 EngA-type G domains span residues 4 to 168 (PIVA…PENK) and 177 to 352 (IKVA…NQRA). GTP-binding positions include 10–17 (GRPNVGKS), 57–61 (DTGGI), 120–123 (NKVD), 183–190 (GKPNVGKS), 230–234 (DTAGL), and 295–298 (NKWD). The KH-like domain occupies 353–437 (MRVPTGGLNE…PIRFIYREKS (85 aa)).

It belongs to the TRAFAC class TrmE-Era-EngA-EngB-Septin-like GTPase superfamily. EngA (Der) GTPase family. In terms of assembly, associates with the 50S ribosomal subunit.

In terms of biological role, GTPase that plays an essential role in the late steps of ribosome biogenesis. This chain is GTPase Der, found in Alkaliphilus metalliredigens (strain QYMF).